The following is a 574-amino-acid chain: Avenacosidase 1 (574 aa).

A chloroplast-targeting transit peptide spans 1 to 55 (MALLCSALSNSTHPSFRSHIGANSENLWHLSADPAQKSKRRCNLTLSSRAARISS). A beta-D-glucoside contacts are provided by residues Q88, H192, and 237 to 238 (NE). Catalysis depends on E238, which acts as the Proton donor. The cysteines at positions 258 and 264 are disulfide-linked. A beta-D-glucoside-binding positions include Y381, E454, W505, 512-513 (EW), and F521. Catalysis depends on E454, which acts as the Nucleophile.

It belongs to the glycosyl hydrolase 1 family. In terms of assembly, homo- and heteromultimer with P60B in a 1:1 stoichiometry. Aggregates to form the fibrillar stromacentre. Expressed in caryopses, coleoptiles, primary leaves, and etiolated and green seedlings, but not in roots.

Its subcellular location is the plastid. The protein resides in the chloroplast stroma. It catalyses the reaction avenacoside B + H2O = 26-desgluco-avenacoside B + D-glucose. Its activity is regulated as follows. Inhibited by N-(3-Dimethylaminopropyl)-N'-ethylcarbodiimide hydrochloride (EDC). Functionally, beta-glucosidase acting as a preformed defense system. Hydrolyzes the bisdesmosides avenacosides A and B to 26-desgluco-avenacosides exhibiting fungicidal activity. Can use beta-fucoside &gt; beta-glucoside &gt; beta-galactoside &gt; beta-xyloside as substrates, but not alpha-glycosides, beta-thioglucosides and disaccharides. This is Avenacosidase 1 (P60A) from Avena sativa (Oat).